We begin with the raw amino-acid sequence, 95 residues long: Protein TusB (95 aa).

It belongs to the DsrH/TusB family. As to quaternary structure, heterohexamer, formed by a dimer of trimers. The hexameric TusBCD complex contains 2 copies each of TusB, TusC and TusD. The TusBCD complex interacts with TusE.

The protein localises to the cytoplasm. In terms of biological role, part of a sulfur-relay system required for 2-thiolation of 5-methylaminomethyl-2-thiouridine (mnm(5)s(2)U) at tRNA wobble positions. This chain is Protein TusB, found in Salmonella arizonae (strain ATCC BAA-731 / CDC346-86 / RSK2980).